The sequence spans 64 residues: MKISELRDKSVEELTGLLDEKQLDAFRLRMAKATGQLGSTHEVRANRRAIAQIKTLINEKQRGA.

This sequence belongs to the universal ribosomal protein uL29 family.

The chain is Large ribosomal subunit protein uL29 from Psychrobacter sp. (strain PRwf-1).